A 385-amino-acid polypeptide reads, in one-letter code: UDP-N-acetylglucosamine--N-acetylmuramyl-(pentapeptide) pyrophosphoryl-undecaprenol N-acetylglucosamine transferase (385 aa).

UDP-N-acetyl-alpha-D-glucosamine contacts are provided by residues 24 to 26 (TAG), Asn143, Arg180, Ser214, and Gln310.

It belongs to the glycosyltransferase 28 family. MurG subfamily.

It localises to the cell membrane. It carries out the reaction di-trans,octa-cis-undecaprenyl diphospho-N-acetyl-alpha-D-muramoyl-L-alanyl-D-glutamyl-meso-2,6-diaminopimeloyl-D-alanyl-D-alanine + UDP-N-acetyl-alpha-D-glucosamine = di-trans,octa-cis-undecaprenyl diphospho-[N-acetyl-alpha-D-glucosaminyl-(1-&gt;4)]-N-acetyl-alpha-D-muramoyl-L-alanyl-D-glutamyl-meso-2,6-diaminopimeloyl-D-alanyl-D-alanine + UDP + H(+). Its pathway is cell wall biogenesis; peptidoglycan biosynthesis. Cell wall formation. Catalyzes the transfer of a GlcNAc subunit on undecaprenyl-pyrophosphoryl-MurNAc-pentapeptide (lipid intermediate I) to form undecaprenyl-pyrophosphoryl-MurNAc-(pentapeptide)GlcNAc (lipid intermediate II). The protein is UDP-N-acetylglucosamine--N-acetylmuramyl-(pentapeptide) pyrophosphoryl-undecaprenol N-acetylglucosamine transferase of Mycolicibacterium smegmatis (strain ATCC 700084 / mc(2)155) (Mycobacterium smegmatis).